A 113-amino-acid chain; its full sequence is UPF0145 protein SynWH7803_1684 (113 aa).

It belongs to the UPF0145 family.

The sequence is that of UPF0145 protein SynWH7803_1684 from Synechococcus sp. (strain WH7803).